The sequence spans 301 residues: Uricase (301 aa).

Residues lysine 11 and threonine 58 each act as charge relay system in the active site. Urate contacts are provided by threonine 58, aspartate 59, phenylalanine 160, arginine 177, valine 228, glutamine 229, and asparagine 255. Residue histidine 257 is the Charge relay system of the active site. The Microbody targeting signal signature appears at 299 to 301; that stretch reads AKL.

The protein belongs to the uricase family.

It is found in the peroxisome. It catalyses the reaction urate + O2 + H2O = 5-hydroxyisourate + H2O2. It functions in the pathway purine metabolism; urate degradation; (S)-allantoin from urate: step 1/3. Catalyzes the oxidation of uric acid to 5-hydroxyisourate, which is further processed to form (S)-allantoin. The sequence is that of Uricase (uaZ) from Emericella nidulans (strain FGSC A4 / ATCC 38163 / CBS 112.46 / NRRL 194 / M139) (Aspergillus nidulans).